Here is a 106-residue protein sequence, read N- to C-terminus: Nucleoid-associated protein Exig_0019 (106 aa).

Residues 1-16 show a composition bias toward low complexity; it reads MRGMGNMNNMMKQMQK. Residues 1 to 23 form a disordered region; sequence MRGMGNMNNMMKQMQKMQKDMAK.

It belongs to the YbaB/EbfC family. In terms of assembly, homodimer.

The protein localises to the cytoplasm. Its subcellular location is the nucleoid. Functionally, binds to DNA and alters its conformation. May be involved in regulation of gene expression, nucleoid organization and DNA protection. The chain is Nucleoid-associated protein Exig_0019 from Exiguobacterium sibiricum (strain DSM 17290 / CCUG 55495 / CIP 109462 / JCM 13490 / 255-15).